We begin with the raw amino-acid sequence, 54 residues long: UPF0391 membrane protein RC1_1636 (54 aa).

2 consecutive transmembrane segments (helical) span residues 3–23 (YWAL…FGGI) and 30–50 (IAQI…IMGL).

This sequence belongs to the UPF0391 family.

The protein localises to the cell membrane. This Rhodospirillum centenum (strain ATCC 51521 / SW) protein is UPF0391 membrane protein RC1_1636.